The chain runs to 279 residues: Large ribosomal subunit protein uL24m (279 aa).

A mitochondrion-targeting transit peptide spans methionine 1–threonine 31. The segment covering arginine 34 to lysine 51 has biased composition (basic and acidic residues). A disordered region spans residues arginine 34–phenylalanine 56. Residues lysine 70–isoleucine 100 form the KOW domain. The disordered stretch occupies residues proline 185 to asparagine 204. A compositionally biased stretch (basic and acidic residues) spans proline 187–threonine 202.

It belongs to the universal ribosomal protein uL24 family. In terms of assembly, component of the mitochondrial large ribosomal subunit (mt-LSU). Mature yeast 74S mitochondrial ribosomes consist of a small (37S) and a large (54S) subunit. The 37S small subunit contains a 15S ribosomal RNA (15S mt-rRNA) and at least 32 different proteins. The 54S large subunit contains a 21S rRNA (21S mt-rRNA) and at least 45 different proteins. uL24m forms the wall of the exit tunnel.

It is found in the mitochondrion. Its function is as follows. Component of the mitochondrial ribosome (mitoribosome), a dedicated translation machinery responsible for the synthesis of mitochondrial genome-encoded proteins, including at least some of the essential transmembrane subunits of the mitochondrial respiratory chain. The mitoribosomes are attached to the mitochondrial inner membrane and translation products are cotranslationally integrated into the membrane. This is Large ribosomal subunit protein uL24m (mrpl40) from Schizosaccharomyces pombe (strain 972 / ATCC 24843) (Fission yeast).